The following is a 78-amino-acid chain: Large ribosomal subunit protein bL28 (78 aa).

It belongs to the bacterial ribosomal protein bL28 family.

This is Large ribosomal subunit protein bL28 from Proteus mirabilis (strain HI4320).